We begin with the raw amino-acid sequence, 341 residues long: Inner membrane ABC transporter permease protein YejE (341 aa).

Topologically, residues 1 to 21 are cytoplasmic; that stretch reads MSRLSPVNQARWARFRHNRRG. A helical transmembrane segment spans residues 22 to 42; it reads YWSLWIFLVLFGLSLCSELIA. At 43–143 the chain is on the periplasmic side; sequence NDKPLLVRYD…ARILYGTRIS (101 aa). The ABC transmembrane type-1 domain maps to 140–332; sequence TRISVLFGLM…LLIFIGEAVR (193 aa). Residues 144-164 form a helical membrane-spanning segment; that stretch reads VLFGLMLTLCSSVMGVLAGAL. Residues 165–178 lie on the Cytoplasmic side of the membrane; the sequence is QGYYGGKVDLWGQR. A helical membrane pass occupies residues 179–199; it reads FIEVWSGMPTLFLIILLSSVV. The Periplasmic segment spans residues 200–201; that stretch reads QP. A helical transmembrane segment spans residues 202–222; it reads NFWWLLAITVLFGWMSLVGVV. Residues 223-252 lie on the Cytoplasmic side of the membrane; that stretch reads RAEFLRTRNFDYIRAAQALGVSDRSIILRH. A helical transmembrane segment spans residues 253-273; sequence MLPNAMVATLTFLPFILCSSI. The Periplasmic segment spans residues 274-307; that stretch reads TTLTSLDFLGFGLPLGSPSLGELLLQGKNNLQAP. Residues 308–328 form a helical membrane-spanning segment; that stretch reads WLGITAFLSVAILLSLLIFIG. The Cytoplasmic segment spans residues 329-341; the sequence is EAVRDAFDPNKAV.

This sequence belongs to the binding-protein-dependent transport system permease family. OppBC subfamily.

It is found in the cell inner membrane. Probably part of a binding-protein-dependent transport system. Probably responsible for the translocation of the substrate across the membrane. The polypeptide is Inner membrane ABC transporter permease protein YejE (yejE) (Escherichia coli (strain K12)).